The sequence spans 137 residues: Small ribosomal subunit protein uS19 (137 aa).

Belongs to the universal ribosomal protein uS19 family.

Protein S19 forms a complex with S13 that binds strongly to the 16S ribosomal RNA. The protein is Small ribosomal subunit protein uS19 of Methanospirillum hungatei JF-1 (strain ATCC 27890 / DSM 864 / NBRC 100397 / JF-1).